We begin with the raw amino-acid sequence, 155 residues long: Ribonuclease H (155 aa).

Residues 1–142 (MLKQVEIFTD…CDVLARDAAS (142 aa)) enclose the RNase H type-1 domain. The Mg(2+) site is built by Asp10, Glu48, Asp70, and Asp134.

This sequence belongs to the RNase H family. As to quaternary structure, monomer. Mg(2+) serves as cofactor.

The protein resides in the cytoplasm. It catalyses the reaction Endonucleolytic cleavage to 5'-phosphomonoester.. In terms of biological role, endonuclease that specifically degrades the RNA of RNA-DNA hybrids. The polypeptide is Ribonuclease H (Serratia proteamaculans (strain 568)).